A 1252-amino-acid polypeptide reads, in one-letter code: MAIIKRVVRSKAGQAPVKKGAKIKKASYDSSRKKEVGVSDLTLLSKISDESINDNLKKRFEHGIIYTYIGYVLISVNPFRDLGIYTDDTMKSYQGKNRLEAPPHVFAIAENMYYNLKSYNENQCVIISGESGAGKTEAAKRIMQYIAATSSTHSESISKIKDMVLATNPLLESFGCAKTLRNNNSSRHGKYLEIKFDAHFQPCAGHITNYLLEKQRVVGQIKNERNFHIFYQFTKGAPEEYRQLFGVQQPEQYIYTSASQCTAVENMDDVEEFNETLNAMRTIGLTKSEQDQIFRALAAILWIGNISFVENEAGNAEIRDKSVTTFVAYLLEVQEELLIKALIERIIETTHGAKRGSTYHSPLNIIQATAVRDALAKAIYNNLFEWIVERVNNSLQAFPGADKSIGILDIYGFEIFEHNSFEQICINYVNEKLQQIFIQLTLKSEQDTYKKEQIHWTPIEYFDNKIVCDLIEAKRPPGIFAAMNDAIATAHADSDAADQAFAQRLNLFTTNPHFELRQNKFVVKHYAGDVTYDIFGITDKNKDQLQKDLVELLSTTSNSFVREIFPDQPQTDSRRRPPTSGDKIIKSANELVETLSKAQPSYIRTIKPNDTKSSTIYDDQRVLHQIKYLGLKENVRIRRAGFAHRQVFEKFVERFYLLSPQCSYAGDYVWDGETLDAVKLILQDASIPTTEYEIGVTQIFIKHPETLFALENMRDKYWYNMAARIQRAWRRYLQKRIDAAIRIQNAIRGKSGVSTFRNDELRNAGDKVYGGKKERRNMSLLGLRGFYGDYLSCNESKTRGSYIKRQANITERVLFSSHGNSLHAMYGGASQRLRKTFILTPTSLWIVGHTKARNAMKYITDYRIDLGKIRSISVTNLQDDWMAVNLMDSPKPDPLINLPFKTELITRLTQLNPRIHVKVSSTIEYLRGPKKLFVVKSQYSDSAPKYHDLYRNGTILVRHGNPPDSTAENRPAFNNEDMYGNLMEAKHKTMKKKVGTKRTPQALPTSSLAASAAQAAYHPKGIRSPTSTEQKSPSKSKPITKTRKPPVSSPVRNTSKTISNSKVYSAPKASVTKRTQDTVSVSKTSVKDDVTQEKNAIIQTEEKQNYSLPENIPQSSQTDSYQAAYDFPGSGNPSELPLQKGDIIYVSKSDPSGWSLASTLDNSKEGWVPTSYIVKYNGNVTDPSAQHQDMNTMKIQEDNTTSINEPETHTNQGPSNTDLGANLASVLAARANKLRSESEEDISREEDDDDDW.

The region spanning 36 to 715 is the Myosin motor domain; that stretch reads VGVSDLTLLS…TLFALENMRD (680 aa). 129–136 contributes to the ATP binding site; it reads GESGAGKT. Phosphoserine is present on Ser-357. The segment at 404 to 486 is actin-binding; that stretch reads SIGILDIYGF…PGIFAAMNDA (83 aa). IQ domains follow at residues 719 to 739 and 740 to 767; these read YNMAARIQRAWRRYLQKRIDA and AIRIQNAIRGKSGVSTFRNDELRNAGDK. The 191-residue stretch at 773 to 963 folds into the TH1 domain; it reads KERRNMSLLG…TILVRHGNPP (191 aa). 3 disordered regions span residues 988-1086, 1106-1136, and 1203-1252; these read KTMK…KTSV, YSLPENIPQSSQTDSYQAAYDFPGSGNPSEL, and INEP…DDDW. A compositionally biased stretch (low complexity) spans 997–1016; that stretch reads KRTPQALPTSSLAASAAQAA. Composition is skewed to polar residues over residues 1050–1063, 1106–1121, and 1203–1219; these read PVRNTSKTISNSKV, YSLPENIPQSSQTDSY, and INEPETHTNQGPSNTDL. The SH3 domain occupies 1116-1178; it reads SQTDSYQAAY…PTSYIVKYNG (63 aa). Over residues 1238 to 1252 the composition is skewed to acidic residues; sequence SEEDISREEDDDDDW.

This sequence belongs to the TRAFAC class myosin-kinesin ATPase superfamily. Myosin family. In terms of processing, phosphorylation of the TEDS site (Ser-357) is required for the polarization of the actin cytoskeleton. Phosphorylation probably activates the myosin-I ATPase activity.

Its subcellular location is the cytoplasm. The protein resides in the cytoskeleton. It localises to the actin patch. Its function is as follows. Type-I myosin implicated in the organization of the actin cytoskeleton. Required for proper actin cytoskeleton polarization. At the cell cortex, assembles in patch-like structures together with proteins from the actin-polymerizing machinery and promotes actin assembly. Functions as actin nucleation-promoting factor (NPF) for the Arp2/3 complex. The polypeptide is Myosin-3 (MYO3) (Candida glabrata (strain ATCC 2001 / BCRC 20586 / JCM 3761 / NBRC 0622 / NRRL Y-65 / CBS 138) (Yeast)).